The sequence spans 92 residues: MPRSLKKGPFIDLHLLQKVEKAVKTNDKKPIRTWSRRSTIFPQMIGLTIAVHNGRQHIPIFVADEMVGHKLGEFAPTRTYRGHTADKKAKKY.

Belongs to the universal ribosomal protein uS19 family.

Protein S19 forms a complex with S13 that binds strongly to the 16S ribosomal RNA. This Baumannia cicadellinicola subsp. Homalodisca coagulata protein is Small ribosomal subunit protein uS19.